A 125-amino-acid polypeptide reads, in one-letter code: Large ribosomal subunit protein bL12 (125 aa).

The protein belongs to the bacterial ribosomal protein bL12 family. Homodimer. Part of the ribosomal stalk of the 50S ribosomal subunit. Forms a multimeric L10(L12)X complex, where L10 forms an elongated spine to which 2 to 4 L12 dimers bind in a sequential fashion. Binds GTP-bound translation factors.

In terms of biological role, forms part of the ribosomal stalk which helps the ribosome interact with GTP-bound translation factors. Is thus essential for accurate translation. This Liberibacter africanus (Citrus greening disease) protein is Large ribosomal subunit protein bL12.